Reading from the N-terminus, the 214-residue chain is Pyridoxine/pyridoxamine 5'-phosphate oxidase (214 aa).

Substrate-binding positions include 9–12 (RRSY) and Lys-68. FMN contacts are provided by residues 63-68 (RVVLLK), 78-79 (YT), Lys-85, and Gln-107. 3 residues coordinate substrate: Tyr-125, Arg-129, and Ser-133. Residues 142-143 (QS) and Trp-187 each bind FMN. Residue 193 to 195 (RLH) coordinates substrate. Position 197 (Arg-197) interacts with FMN.

Belongs to the pyridoxamine 5'-phosphate oxidase family. In terms of assembly, homodimer. FMN is required as a cofactor.

The catalysed reaction is pyridoxamine 5'-phosphate + O2 + H2O = pyridoxal 5'-phosphate + H2O2 + NH4(+). It catalyses the reaction pyridoxine 5'-phosphate + O2 = pyridoxal 5'-phosphate + H2O2. The protein operates within cofactor metabolism; pyridoxal 5'-phosphate salvage; pyridoxal 5'-phosphate from pyridoxamine 5'-phosphate: step 1/1. It functions in the pathway cofactor metabolism; pyridoxal 5'-phosphate salvage; pyridoxal 5'-phosphate from pyridoxine 5'-phosphate: step 1/1. Its function is as follows. Catalyzes the oxidation of either pyridoxine 5'-phosphate (PNP) or pyridoxamine 5'-phosphate (PMP) into pyridoxal 5'-phosphate (PLP). The protein is Pyridoxine/pyridoxamine 5'-phosphate oxidase of Christiangramia forsetii (strain DSM 17595 / CGMCC 1.15422 / KT0803) (Gramella forsetii).